We begin with the raw amino-acid sequence, 240 residues long: Dihydromonapterin reductase (240 aa).

The active-site Proton acceptor is Y152.

Belongs to the short-chain dehydrogenases/reductases (SDR) family. FolM subfamily.

The enzyme catalyses (6S)-5,6,7,8-tetrahydrofolate + NADP(+) = 7,8-dihydrofolate + NADPH + H(+). It catalyses the reaction 7,8-dihydromonapterin + NADPH + H(+) = 5,6,7,8-tetrahydromonapterin + NADP(+). Its function is as follows. Catalyzes the reduction of dihydromonapterin to tetrahydromonapterin. Also has lower activity with dihydrofolate. This Escherichia coli O139:H28 (strain E24377A / ETEC) protein is Dihydromonapterin reductase (folM).